A 104-amino-acid polypeptide reads, in one-letter code: Iron-sulfur cluster assembly protein CyaY (104 aa).

This sequence belongs to the frataxin family.

Functionally, involved in iron-sulfur (Fe-S) cluster assembly. May act as a regulator of Fe-S biogenesis. This chain is Iron-sulfur cluster assembly protein CyaY, found in Aeromonas salmonicida (strain A449).